A 393-amino-acid polypeptide reads, in one-letter code: Staphopain B (393 aa).

The first 36 residues, 1–36 (MNSSYKSRVFNIISIIMVSMLILSLGAFANNNKAKA), serve as a signal peptide directing secretion. Residues 37-219 (DSHSKQLEIN…KVEENEAIQE (183 aa)) constitute a propeptide that is removed on maturation. Active-site residues include C243, H340, and N360.

Belongs to the peptidase C47 family. In terms of assembly, in the cytoplasm, prematurely activated/folded SspB forms a stable non-covalent complex with SspC. Post-translationally, proteolytically cleaved by staphylococcal serine protease (SspA).

It localises to the secreted. Prematurely activated/folded staphopain B is inhibited by staphostatin B (SspC), which is probably required to protect staphylococcal cytoplasmic proteins from degradation by SspB. Functionally, cysteine protease that plays an important role in the inhibition of host innate immune response. Degrades host elastin, fibrogen, fibronectin and kininogen. Blocks phagocytosis of opsonised S.aureus by neutrophils and monocytes by inducing their death in a proteolytic activity-dependent manner. Decreases surface expression of the 'don't eat me' signal CD31 on neutrophils. Cleaves host galectin-3/LGALS3, thereby inhibiting the neutrophil-activating ability of the lectin. In Staphylococcus aureus (strain MSSA476), this protein is Staphopain B (sspB).